A 1084-amino-acid polypeptide reads, in one-letter code: Myosin heavy chain, skeletal muscle (1084 aa).

Disordered regions lie at residues 1–20, 270–292, and 298–317; these read SAET…KTKE, EIEA…SREL, and RLEE…KKRE. Residues 1–258 are alpha-helical tailpiece (S2); it reads SAETEKEMAN…SKIEDEQALM (258 aa). The tract at residues 259–1084 is rodlike tail (S2 and LMM domains); that stretch reads TNLQRIEELE…DVHSKVISEE (826 aa). The span at 273–292 shows a compositional bias: basic and acidic residues; it reads AERASRAKAEKQRSDLSREL. Positions 455–1084 form a coiled coil; it reads QAFTQQIEGL…DVHSKVISEE (630 aa).

As to quaternary structure, muscle myosin is a hexameric protein that consists of 2 heavy chain subunits (MHC), 2 alkali light chain subunits (MLC) and 2 regulatory light chain subunits (MLC-2).

It localises to the cytoplasm. It is found in the myofibril. Functionally, muscle contraction. The polypeptide is Myosin heavy chain, skeletal muscle (Oryctolagus cuniculus (Rabbit)).